A 497-amino-acid polypeptide reads, in one-letter code: L-arabinose isomerase (497 aa).

E306, E333, H349, and H448 together coordinate Mn(2+).

This sequence belongs to the arabinose isomerase family. It depends on Mn(2+) as a cofactor.

It catalyses the reaction beta-L-arabinopyranose = L-ribulose. It participates in carbohydrate degradation; L-arabinose degradation via L-ribulose; D-xylulose 5-phosphate from L-arabinose (bacterial route): step 1/3. Functionally, catalyzes the conversion of L-arabinose to L-ribulose. In Vibrio parahaemolyticus serotype O3:K6 (strain RIMD 2210633), this protein is L-arabinose isomerase.